The chain runs to 284 residues: Putative ABC transporter ATP-binding protein SCO5958 (284 aa).

One can recognise an ABC transporter domain in the interval 15–250; that stretch reads VALRGAAFAY…DLLRRAGLRL (236 aa). ATP is bound at residue 48–55; that stretch reads GRNGSGKT.

This sequence belongs to the ABC transporter superfamily.

The protein resides in the cell membrane. Functionally, probably part of an ABC transporter complex. Responsible for energy coupling to the transport system. This Streptomyces coelicolor (strain ATCC BAA-471 / A3(2) / M145) protein is Putative ABC transporter ATP-binding protein SCO5958.